The following is a 438-amino-acid chain: UDP-N-acetylmuramoylalanine--D-glutamate ligase (438 aa).

Residue G112–T118 participates in ATP binding.

It belongs to the MurCDEF family.

The protein resides in the cytoplasm. It carries out the reaction UDP-N-acetyl-alpha-D-muramoyl-L-alanine + D-glutamate + ATP = UDP-N-acetyl-alpha-D-muramoyl-L-alanyl-D-glutamate + ADP + phosphate + H(+). It participates in cell wall biogenesis; peptidoglycan biosynthesis. Its function is as follows. Cell wall formation. Catalyzes the addition of glutamate to the nucleotide precursor UDP-N-acetylmuramoyl-L-alanine (UMA). The polypeptide is UDP-N-acetylmuramoylalanine--D-glutamate ligase (Sodalis glossinidius (strain morsitans)).